A 478-amino-acid polypeptide reads, in one-letter code: GMP reductase (478 aa).

2 consecutive CBS domains span residues 95 to 152 (VVDT…VRDI) and 153 to 211 (ALSD…AVDA). NADP(+) contacts are provided by residues 245 to 247 (DTA) and 295 to 297 (GVG). Residue cysteine 302 is the Thioimidate intermediate of the active site.

Belongs to the IMPDH/GMPR family. GuaB1 subfamily. As to quaternary structure, homooctamer composed of two tetramers. The oligomerization state is regulated by ligands and pH. The cofactor is a monovalent cation.

It carries out the reaction IMP + NH4(+) + NADP(+) = GMP + NADPH + 2 H(+). It functions in the pathway purine metabolism; IMP biosynthesis via salvage pathway. Its activity is regulated as follows. Activity is allosterically regulated by the ATP/GTP ratio in a pH-dependent manner. At pH 7.8, GTP has only a minor positive effect and ATP only a minor negative effect on the activity, however, at lower pH values, the effects of ATP and GTP increase. ATP-dependent inhibition can be restored by increasing GTP concentration. IMP and XMP are competitive inhibitors. Its function is as follows. Involved in the purine-salvage pathway. Catalyzes the NADPH-dependent conversion of GMP to IMP. Is not essential for viability, but may contribute to the regulation of the purine nucleotide pool by recycling GMP to IMP. The chain is GMP reductase from Mycolicibacterium smegmatis (strain ATCC 700084 / mc(2)155) (Mycobacterium smegmatis).